A 228-amino-acid polypeptide reads, in one-letter code: NAD(P)H-hydrate epimerase (228 aa).

Residues 9–215 (AISIDEELFN…RLEEKYSLEL (207 aa)) enclose the YjeF N-terminal domain. 58 to 62 (NNGGD) lines the (6S)-NADPHX pocket. Asparagine 59 and aspartate 123 together coordinate K(+). Residues 127-133 (GFSFKPP) and aspartate 156 contribute to the (6S)-NADPHX site. Serine 159 is a K(+) binding site.

Belongs to the NnrE/AIBP family. Requires K(+) as cofactor.

It catalyses the reaction (6R)-NADHX = (6S)-NADHX. The catalysed reaction is (6R)-NADPHX = (6S)-NADPHX. Functionally, catalyzes the epimerization of the S- and R-forms of NAD(P)HX, a damaged form of NAD(P)H that is a result of enzymatic or heat-dependent hydration. This is a prerequisite for the S-specific NAD(P)H-hydrate dehydratase to allow the repair of both epimers of NAD(P)HX. The sequence is that of NAD(P)H-hydrate epimerase from Anopheles darlingi (Mosquito).